The primary structure comprises 434 residues: Methylenetetrahydrofolate--tRNA-(uracil-5-)-methyltransferase TrmFO (434 aa).

10-15 (GAGLAG) provides a ligand contact to FAD.

It belongs to the MnmG family. TrmFO subfamily. FAD serves as cofactor.

Its subcellular location is the cytoplasm. It carries out the reaction uridine(54) in tRNA + (6R)-5,10-methylene-5,6,7,8-tetrahydrofolate + NADH + H(+) = 5-methyluridine(54) in tRNA + (6S)-5,6,7,8-tetrahydrofolate + NAD(+). The enzyme catalyses uridine(54) in tRNA + (6R)-5,10-methylene-5,6,7,8-tetrahydrofolate + NADPH + H(+) = 5-methyluridine(54) in tRNA + (6S)-5,6,7,8-tetrahydrofolate + NADP(+). Its function is as follows. Catalyzes the folate-dependent formation of 5-methyl-uridine at position 54 (M-5-U54) in all tRNAs. The polypeptide is Methylenetetrahydrofolate--tRNA-(uracil-5-)-methyltransferase TrmFO (Bacillus mycoides (strain KBAB4) (Bacillus weihenstephanensis)).